A 305-amino-acid chain; its full sequence is Mitochondrial thiamine pyrophosphate carrier 1 (305 aa).

Helical transmembrane passes span 16 to 32 (VSPYESLLAGSISGAVA), 84 to 100 (ILYVLYGAAQFTTYSSI), 122 to 142 (LVSGTGAGVVSTLVTYPFDLL), 169 to 193 (GFTGLFAGIKPAMLSISTTTGLMFW), 213 to 229 (ICGFIAGATSKGITFPL), and 270 to 287 (GFGISVLKTSPTSAVSLF). Solcar repeat units lie at residues 16–103 (VSPY…ISRW), 116–201 (PSSA…VRET), and 206–295 (DIPF…SLAA).

The protein belongs to the mitochondrial carrier (TC 2.A.29) family.

It is found in the mitochondrion inner membrane. Functionally, mitochondrial transporter that mediates uptake of thiamine pyrophosphate (ThPP) into mitochondria. The chain is Mitochondrial thiamine pyrophosphate carrier 1 (TPC1) from Scheffersomyces stipitis (strain ATCC 58785 / CBS 6054 / NBRC 10063 / NRRL Y-11545) (Yeast).